A 238-amino-acid chain; its full sequence is Sugar fermentation stimulation protein homolog (238 aa).

This sequence belongs to the SfsA family.

In Brucella abortus (strain S19), this protein is Sugar fermentation stimulation protein homolog.